The chain runs to 608 residues: Rap1 GTPase-GDP dissociation stimulator 1 (608 aa).

ARM repeat units follow at residues 89–131 (GLIS…DQAG) and 171–212 (DSLQ…NLAE). The interval 122–171 (EGRSAVDQAGGAQIVVDHLRSLCSKTDPASEKLLTVFCGMLMNYSNEKND) is prevents binding to prenylated RHOA. Position 231 is an N6-acetyllysine (Lys231). ARM repeat units lie at residues 348–391 (DGNC…NLAI), 392–432 (PVVN…MLID), and 480–520 (SKDV…LIAA).

Interacts with RABL3. Interacts with RHOT1. In terms of assembly, interacts with unprenylated RHOA; the interaction is direct. Interacts with RAP1A. Interacts with KRAS. Interacts with RAC1. Interacts with RAP1B. Preferentially interacts with unprenylated GTPases that will become geranylgeranylated. May also interact with prenylated GTPases. As to quaternary structure, interacts with prenylated RHOA; the interaction is direct and in a 1:1 stoichiometry. Interacts with RAP1A. Interacts with KRAS. Interacts with RAC1. Interacts with RAP1B. Preferentially interacts with prenylated GTPases. The N-terminus is blocked. In terms of processing, forms covalent cross-links mediated by transglutaminase TGM2, between a glutamine and the epsilon-amino group of a lysine residue, forming homopolymers and heteropolymers. As to expression, brain.

It is found in the cytoplasm. The protein localises to the cytosol. The protein resides in the endoplasmic reticulum. It localises to the mitochondrion. Its subcellular location is the nucleus. Acts as a GEF (guanine nucleotide exchange factor) for the Rho family of small GTP-binding proteins (G proteins) that stimulates the dissociation of GDP to enable subsequent binding of GTP. Additionally, appears to chaperone the processing and/or trafficking of small GTPases containing a C-terminal polybasic region independently of GEF activity. Targets include RAP1A/RAP1B, RHOA, RHOB, RHOC, RAC1 and KRAS. Regulates mitochondrial dynamics by controlling RHOT function to promote mitochondrial fission during high calcium conditions. Able to promote the Ca(2+) release from the endoplasmic reticulum via both inositol trisphosphate (Ins3P) and ryanodine sensitive receptors leading to a enhanced mitochondrial Ca(2+) uptake. Its function is as follows. Acts as a GEF (guanine nucleotide exchange factor) for unprenylated RHOA. Chaperones the entry and passage of small GTPases through the prenylation pathway. Recognizes the last amino acid in the GTPase C-terminal CAAX motif with a preference for 'Leu' over 'Met', indicating involvement in the geranylgeranylation pathway. May also recognize prenylated GTPases. In terms of biological role, acts as a GEF (guanine nucleotide exchange factor) for prenylated RHOA. Acts as a GEF for RHOC. Chaperones the downstream trafficking and/or processing of small newly prenylated GTPases. Escorts RAC1 to the nucleus. The chain is Rap1 GTPase-GDP dissociation stimulator 1 (RAP1GDS1) from Bos taurus (Bovine).